The primary structure comprises 140 residues: Low calcium response locus protein T (140 aa).

In Yersinia pestis, this protein is Low calcium response locus protein T (lcrT).